The primary structure comprises 215 residues: Adenylate kinase (215 aa).

ATP is bound at residue 10-15 (GAGKGT). An NMP region spans residues 30-59 (STGDILRENVKNETELGKKAKEYMDKGLLV). Residues Thr-31, Arg-36, 57 to 59 (LLV), 85 to 88 (GFPR), and Gln-92 contribute to the AMP site. The segment at 126-163 (GRRICKNCGASFHVIYRPPQKEGVCDVCGGELYQREDD) is LID. Arg-127 provides a ligand contact to ATP. The Zn(2+) site is built by Cys-130 and Cys-133. 136-137 (SF) contacts ATP. Zn(2+) contacts are provided by Cys-150 and Cys-153. 2 residues coordinate AMP: Arg-160 and Arg-171. ATP is bound at residue Gln-198.

This sequence belongs to the adenylate kinase family. As to quaternary structure, monomer.

The protein localises to the cytoplasm. It catalyses the reaction AMP + ATP = 2 ADP. The protein operates within purine metabolism; AMP biosynthesis via salvage pathway; AMP from ADP: step 1/1. Functionally, catalyzes the reversible transfer of the terminal phosphate group between ATP and AMP. Plays an important role in cellular energy homeostasis and in adenine nucleotide metabolism. This is Adenylate kinase from Caldicellulosiruptor bescii (strain ATCC BAA-1888 / DSM 6725 / KCTC 15123 / Z-1320) (Anaerocellum thermophilum).